A 577-amino-acid chain; its full sequence is Proline--tRNA ligase (577 aa).

The protein belongs to the class-II aminoacyl-tRNA synthetase family. ProS type 1 subfamily. Homodimer.

Its subcellular location is the cytoplasm. The catalysed reaction is tRNA(Pro) + L-proline + ATP = L-prolyl-tRNA(Pro) + AMP + diphosphate. Functionally, catalyzes the attachment of proline to tRNA(Pro) in a two-step reaction: proline is first activated by ATP to form Pro-AMP and then transferred to the acceptor end of tRNA(Pro). As ProRS can inadvertently accommodate and process non-cognate amino acids such as alanine and cysteine, to avoid such errors it has two additional distinct editing activities against alanine. One activity is designated as 'pretransfer' editing and involves the tRNA(Pro)-independent hydrolysis of activated Ala-AMP. The other activity is designated 'posttransfer' editing and involves deacylation of mischarged Ala-tRNA(Pro). The misacylated Cys-tRNA(Pro) is not edited by ProRS. The polypeptide is Proline--tRNA ligase (Thermotoga neapolitana (strain ATCC 49049 / DSM 4359 / NBRC 107923 / NS-E)).